The following is a 94-amino-acid chain: Co-chaperonin GroES (94 aa).

The protein belongs to the GroES chaperonin family. Heptamer of 7 subunits arranged in a ring. Interacts with the chaperonin GroEL.

It is found in the cytoplasm. In terms of biological role, together with the chaperonin GroEL, plays an essential role in assisting protein folding. The GroEL-GroES system forms a nano-cage that allows encapsulation of the non-native substrate proteins and provides a physical environment optimized to promote and accelerate protein folding. GroES binds to the apical surface of the GroEL ring, thereby capping the opening of the GroEL channel. This Ruminiclostridium cellulolyticum (strain ATCC 35319 / DSM 5812 / JCM 6584 / H10) (Clostridium cellulolyticum) protein is Co-chaperonin GroES.